Here is a 451-residue protein sequence, read N- to C-terminus: mRNA cleavage and polyadenylation factor CLP1 (451 aa).

ATP contacts are provided by residues glutamate 33, lysine 72, and 133 to 138; that span reads NTGKTA.

This sequence belongs to the Clp1 family. Clp1 subfamily. In terms of assembly, component of a pre-mRNA cleavage factor complex. Interacts directly with PCF11.

It is found in the nucleus. Its function is as follows. Required for endonucleolytic cleavage during polyadenylation-dependent pre-mRNA 3'-end formation. In Vanderwaltozyma polyspora (strain ATCC 22028 / DSM 70294 / BCRC 21397 / CBS 2163 / NBRC 10782 / NRRL Y-8283 / UCD 57-17) (Kluyveromyces polysporus), this protein is mRNA cleavage and polyadenylation factor CLP1.